A 280-amino-acid chain; its full sequence is Phosphatidylserine decarboxylase proenzyme (280 aa).

Active-site charge relay system; for autoendoproteolytic cleavage activity residues include Asp-88, His-144, and Ser-247. Ser-247 (schiff-base intermediate with substrate; via pyruvic acid; for decarboxylase activity) is an active-site residue. Ser-247 carries the pyruvic acid (Ser); by autocatalysis modification.

Belongs to the phosphatidylserine decarboxylase family. PSD-B subfamily. Prokaryotic type I sub-subfamily. Heterodimer of a large membrane-associated beta subunit and a small pyruvoyl-containing alpha subunit. Requires pyruvate as cofactor. In terms of processing, is synthesized initially as an inactive proenzyme. Formation of the active enzyme involves a self-maturation process in which the active site pyruvoyl group is generated from an internal serine residue via an autocatalytic post-translational modification. Two non-identical subunits are generated from the proenzyme in this reaction, and the pyruvate is formed at the N-terminus of the alpha chain, which is derived from the carboxyl end of the proenzyme. The autoendoproteolytic cleavage occurs by a canonical serine protease mechanism, in which the side chain hydroxyl group of the serine supplies its oxygen atom to form the C-terminus of the beta chain, while the remainder of the serine residue undergoes an oxidative deamination to produce ammonia and the pyruvoyl prosthetic group on the alpha chain. During this reaction, the Ser that is part of the protease active site of the proenzyme becomes the pyruvoyl prosthetic group, which constitutes an essential element of the active site of the mature decarboxylase.

The protein localises to the cell membrane. It carries out the reaction a 1,2-diacyl-sn-glycero-3-phospho-L-serine + H(+) = a 1,2-diacyl-sn-glycero-3-phosphoethanolamine + CO2. It participates in phospholipid metabolism; phosphatidylethanolamine biosynthesis; phosphatidylethanolamine from CDP-diacylglycerol: step 2/2. Catalyzes the formation of phosphatidylethanolamine (PtdEtn) from phosphatidylserine (PtdSer). This chain is Phosphatidylserine decarboxylase proenzyme, found in Stenotrophomonas maltophilia (strain R551-3).